The sequence spans 348 residues: Fructose-1,6-bisphosphatase class 1 (348 aa).

Mg(2+) is bound by residues Glu107, Asp129, Ile131, and Asp132. Substrate-binding positions include Asp132–Ser135, Asn224, Tyr252, and Lys282. A Mg(2+)-binding site is contributed by Glu288.

Belongs to the FBPase class 1 family. In terms of assembly, homotetramer. Requires Mg(2+) as cofactor.

It is found in the cytoplasm. It catalyses the reaction beta-D-fructose 1,6-bisphosphate + H2O = beta-D-fructose 6-phosphate + phosphate. It functions in the pathway carbohydrate biosynthesis; Calvin cycle. The protein is Fructose-1,6-bisphosphatase class 1 of Microcystis aeruginosa (strain NIES-843 / IAM M-2473).